The chain runs to 640 residues: Threonine--tRNA ligase (640 aa).

The TGS domain maps to 1-60; it reads MKITFPDGAVKEFEPGVSTADIAASISPGLKKKALAGKLNGELLDLVTPIHEDGAIEIVT. The catalytic stretch occupies residues 241 to 538; that stretch reads DHRKLGKELE…LIEEYKGAFP (298 aa). Residues C334, H385, and H515 each contribute to the Zn(2+) site.

The protein belongs to the class-II aminoacyl-tRNA synthetase family. In terms of assembly, homodimer. It depends on Zn(2+) as a cofactor.

Its subcellular location is the cytoplasm. It catalyses the reaction tRNA(Thr) + L-threonine + ATP = L-threonyl-tRNA(Thr) + AMP + diphosphate + H(+). Catalyzes the attachment of threonine to tRNA(Thr) in a two-step reaction: L-threonine is first activated by ATP to form Thr-AMP and then transferred to the acceptor end of tRNA(Thr). Also edits incorrectly charged L-seryl-tRNA(Thr). This is Threonine--tRNA ligase from Listeria monocytogenes serovar 1/2a (strain ATCC BAA-679 / EGD-e).